A 367-amino-acid polypeptide reads, in one-letter code: Peptide chain release factor 2 (367 aa).

At glutamine 254 the chain carries N5-methylglutamine.

It belongs to the prokaryotic/mitochondrial release factor family. Post-translationally, methylated by PrmC. Methylation increases the termination efficiency of RF2.

It is found in the cytoplasm. In terms of biological role, peptide chain release factor 2 directs the termination of translation in response to the peptide chain termination codons UGA and UAA. The sequence is that of Peptide chain release factor 2 from Variovorax paradoxus (strain S110).